A 407-amino-acid chain; its full sequence is Acetate kinase (407 aa).

Asparagine 10 lines the Mg(2+) pocket. Lysine 17 provides a ligand contact to ATP. A substrate-binding site is contributed by arginine 93. Aspartate 150 (proton donor/acceptor) is an active-site residue. Residues 210-214 (HLGNG), 284-286 (DMR), and 332-336 (GVGEN) contribute to the ATP site. Glutamate 386 serves as a coordination point for Mg(2+).

It belongs to the acetokinase family. Homodimer. Mg(2+) serves as cofactor. Requires Mn(2+) as cofactor.

The protein localises to the cytoplasm. The catalysed reaction is acetate + ATP = acetyl phosphate + ADP. The protein operates within metabolic intermediate biosynthesis; acetyl-CoA biosynthesis; acetyl-CoA from acetate: step 1/2. Catalyzes the formation of acetyl phosphate from acetate and ATP. Can also catalyze the reverse reaction. This Streptomyces coelicolor (strain ATCC BAA-471 / A3(2) / M145) protein is Acetate kinase.